The sequence spans 348 residues: Lipoyl synthase (348 aa).

Residues methionine 1–lysine 45 form a disordered region. Cysteine 73, cysteine 78, cysteine 84, cysteine 99, cysteine 103, cysteine 106, and serine 314 together coordinate [4Fe-4S] cluster. The Radical SAM core domain occupies tryptophan 85 to methionine 303.

Belongs to the radical SAM superfamily. Lipoyl synthase family. The cofactor is [4Fe-4S] cluster.

The protein localises to the cytoplasm. It catalyses the reaction [[Fe-S] cluster scaffold protein carrying a second [4Fe-4S](2+) cluster] + N(6)-octanoyl-L-lysyl-[protein] + 2 oxidized [2Fe-2S]-[ferredoxin] + 2 S-adenosyl-L-methionine + 4 H(+) = [[Fe-S] cluster scaffold protein] + N(6)-[(R)-dihydrolipoyl]-L-lysyl-[protein] + 4 Fe(3+) + 2 hydrogen sulfide + 2 5'-deoxyadenosine + 2 L-methionine + 2 reduced [2Fe-2S]-[ferredoxin]. It participates in protein modification; protein lipoylation via endogenous pathway; protein N(6)-(lipoyl)lysine from octanoyl-[acyl-carrier-protein]: step 2/2. Catalyzes the radical-mediated insertion of two sulfur atoms into the C-6 and C-8 positions of the octanoyl moiety bound to the lipoyl domains of lipoate-dependent enzymes, thereby converting the octanoylated domains into lipoylated derivatives. The chain is Lipoyl synthase from Marinobacter nauticus (strain ATCC 700491 / DSM 11845 / VT8) (Marinobacter aquaeolei).